Consider the following 135-residue polypeptide: Protein NrdI (135 aa).

This sequence belongs to the NrdI family.

Probably involved in ribonucleotide reductase function. The chain is Protein NrdI from Brucella abortus (strain S19).